The following is a 443-amino-acid chain: ATP-dependent protease ATPase subunit HslU (443 aa).

ATP is bound by residues isoleucine 19 and 61-66 (GVGKTE). The interval 139–158 (PPRDIGFSQPEEKDSNTRQV) is disordered. ATP-binding residues include aspartate 256, glutamate 321, and arginine 393.

Belongs to the ClpX chaperone family. HslU subfamily. In terms of assembly, a double ring-shaped homohexamer of HslV is capped on each side by a ring-shaped HslU homohexamer. The assembly of the HslU/HslV complex is dependent on binding of ATP.

Its subcellular location is the cytoplasm. Its function is as follows. ATPase subunit of a proteasome-like degradation complex; this subunit has chaperone activity. The binding of ATP and its subsequent hydrolysis by HslU are essential for unfolding of protein substrates subsequently hydrolyzed by HslV. HslU recognizes the N-terminal part of its protein substrates and unfolds these before they are guided to HslV for hydrolysis. This is ATP-dependent protease ATPase subunit HslU from Cupriavidus taiwanensis (strain DSM 17343 / BCRC 17206 / CCUG 44338 / CIP 107171 / LMG 19424 / R1) (Ralstonia taiwanensis (strain LMG 19424)).